Here is a 1071-residue protein sequence, read N- to C-terminus: ATP-dependent helicase/deoxyribonuclease subunit B (1071 aa).

Belongs to the helicase family. AddB/RexB type 2 subfamily. In terms of assembly, heterodimer of AddA and RexB. It depends on Mg(2+) as a cofactor.

The heterodimer acts as both an ATP-dependent DNA helicase and an ATP-dependent, dual-direction single-stranded exonuclease. Recognizes the chi site generating a DNA molecule suitable for the initiation of homologous recombination. This subunit has 5' -&gt; 3' nuclease activity but not helicase activity. This chain is ATP-dependent helicase/deoxyribonuclease subunit B, found in Streptococcus pyogenes serotype M49 (strain NZ131).